The sequence spans 190 residues: Biphenyl-2,3-diol 1,2-dioxygenase 2 (190 aa).

Residues 6–124 (KFAHVVLQTS…DGNFVELQID (119 aa)) form the VOC domain. Positions 9, 72, and 120 each coordinate Fe cation.

The protein belongs to the extradiol ring-cleavage dioxygenase family. Homohexamer. It depends on Fe(2+) as a cofactor.

It catalyses the reaction biphenyl-2,3-diol + O2 = 2-hydroxy-6-oxo-6-phenylhexa-2,4-dienoate + H(+). It participates in xenobiotic degradation; biphenyl degradation; 2-hydroxy-2,4-pentadienoate and benzoate from biphenyl: step 3/4. The protein is Biphenyl-2,3-diol 1,2-dioxygenase 2 (bphC2) of Rhodococcus globerulus.